The sequence spans 96 residues: Co-chaperonin GroES (96 aa).

The protein belongs to the GroES chaperonin family. As to quaternary structure, heptamer of 7 subunits arranged in a ring. Interacts with the chaperonin GroEL.

The protein resides in the cytoplasm. Functionally, together with the chaperonin GroEL, plays an essential role in assisting protein folding. The GroEL-GroES system forms a nano-cage that allows encapsulation of the non-native substrate proteins and provides a physical environment optimized to promote and accelerate protein folding. GroES binds to the apical surface of the GroEL ring, thereby capping the opening of the GroEL channel. This chain is Co-chaperonin GroES, found in Legionella pneumophila (strain Paris).